The following is a 96-amino-acid chain: Co-chaperonin GroES (96 aa).

This sequence belongs to the GroES chaperonin family. In terms of assembly, heptamer of 7 subunits arranged in a ring. Interacts with the chaperonin GroEL.

It is found in the cytoplasm. Functionally, together with the chaperonin GroEL, plays an essential role in assisting protein folding. The GroEL-GroES system forms a nano-cage that allows encapsulation of the non-native substrate proteins and provides a physical environment optimized to promote and accelerate protein folding. GroES binds to the apical surface of the GroEL ring, thereby capping the opening of the GroEL channel. This Aliivibrio fischeri (strain ATCC 700601 / ES114) (Vibrio fischeri) protein is Co-chaperonin GroES.